An 86-amino-acid chain; its full sequence is MLAISSNLSKMIIFIFAIIIIVVLCVITYLYLYKDESLVSKHYINYMAIPENDGVFTWLPDFFPHVAVDISIYTNVEDDYFFLIFP.

Residues 12–32 (IIFIFAIIIIVVLCVITYLYL) traverse the membrane as a helical segment.

The protein resides in the membrane. This is an uncharacterized protein from Escherichia coli (strain K12).